A 342-amino-acid chain; its full sequence is P2Y purinoceptor 12 (342 aa).

At 1-27 (MQAVDNLTSAPGNTSLCTRDYKITQVL) the chain is on the extracellular side. N-linked (GlcNAc...) asparagine glycosylation is found at Asn6 and Asn13. 2 disulfides stabilise this stretch: Cys17/Cys270 and Cys97/Cys175. A helical membrane pass occupies residues 28–50 (FPLLYTVLFFVGLITNGLAMRIF). Residues 51–61 (FQIRSKSNFII) are Cytoplasmic-facing. Ser55 and Ser57 each carry phosphoserine. The chain crosses the membrane as a helical span at residues 62 to 82 (FLKNTVISDLLMILTFPFKIL). Residues 83-97 (SDAKLGTGPLRTFVC) are Extracellular-facing. Positions 93, 97, and 105 each coordinate ADP. Residues 98-118 (QVTSVIFYFTMYISISFLGLI) form a helical membrane-spanning segment. Residues 119-142 (TIDRYQKTTRPFKTSNPKNLLGAK) are Cytoplasmic-facing. Residues 143 to 162 (ILSVVIWAFMFLLSLPNMIL) form a helical membrane-spanning segment. ADP is bound by residues 156–159 (SLPN), 175–179 (CSFLK), His187, and Asn191. Residues 163 to 185 (TNRQPRDKNVKKCSFLKSEFGLV) lie on the Extracellular side of the membrane. A helical transmembrane segment spans residues 186–207 (WHEIVNYICQVIFWINFLIVIV). Over 208–233 (CYTLITKELYRSYVRTRGVGKVPRKK) the chain is Cytoplasmic. The helical transmembrane segment at 234–259 (VNVKVFIIIAVFFICFVPFHFARIPY) threads the bilayer. ADP is bound by residues 256–259 (RIPY), Gln263, and Lys280. Residues 260-278 (TLSQTRDVFDCTAENTLFY) are Extracellular-facing. Residues 279–298 (VKESTLWLTSLNACLDPFIY) form a helical membrane-spanning segment. The Cytoplasmic portion of the chain corresponds to 299–342 (FFLCKSFRNSLISMLKCPNSATSLSQDNRKKEQDGGDPNEETPM). The segment at 319-342 (ATSLSQDNRKKEQDGGDPNEETPM) is disordered. Residues 333–342 (GGDPNEETPM) are compositionally biased toward acidic residues.

The protein belongs to the G-protein coupled receptor 1 family. In terms of tissue distribution, highly expressed in the platelets, lower levels in the brain. Lowest levels in the lung, appendix, pituitary and adrenal gland. Expressed in the spinal cord and in the fetal brain.

Its subcellular location is the cell membrane. In terms of biological role, receptor for ADP and ATP coupled to G-proteins that inhibit the adenylyl cyclase second messenger system. Not activated by UDP and UTP. Required for normal platelet aggregation and blood coagulation. The protein is P2Y purinoceptor 12 (P2RY12) of Homo sapiens (Human).